The following is a 379-amino-acid chain: Pathogen-associated molecular patterns-induced protein A70 (379 aa).

A helical transmembrane segment spans residues 7-29 (VASFFTPTTLFLLLNLMIGTIVV). An N-linked (GlcNAc...) asparagine glycan is attached at Asn-122. The interval 133 to 154 (TGSDPHSHSHSHLDLHPDPAPA) is disordered. The span at 137–149 (PHSHSHSHLDLHP) shows a compositional bias: basic and acidic residues. An N-linked (GlcNAc...) asparagine glycan is attached at Asn-170. 2 disordered regions span residues 216–238 (PEEDQPTGTGVNSQINPPGLTRA) and 256–347 (SDPD…DGVD). Polar residues predominate over residues 221-231 (PTGTGVNSQIN). Composition is skewed to basic and acidic residues over residues 256–285 (SDPDLDQKQNPDPVLHEEHKHVRSKSESKK) and 322–335 (SLERRRPDTTRVER).

The protein resides in the membrane. This chain is Pathogen-associated molecular patterns-induced protein A70, found in Arabidopsis thaliana (Mouse-ear cress).